The primary structure comprises 356 residues: Tyrosine recombinase XerS (356 aa).

The Core-binding (CB) domain occupies 16–121 (IMPSYVLEYY…ALSSLYKYLT (106 aa)). The region spanning 169 to 354 (GFLDYIDNEY…INEEQKNALD (186 aa)) is the Tyr recombinase domain. Active-site residues include R210, K234, H306, R309, and H332. Y341 (O-(3'-phospho-DNA)-tyrosine intermediate) is an active-site residue.

It belongs to the 'phage' integrase family. XerS subfamily.

It localises to the cytoplasm. With respect to regulation, ftsK is required for recombination. Its function is as follows. Site-specific tyrosine recombinase, which acts by catalyzing the cutting and rejoining of the recombining DNA molecules. Essential to convert dimers of the bacterial chromosome into monomers to permit their segregation at cell division. The chain is Tyrosine recombinase XerS from Lactococcus lactis subsp. lactis (strain IL1403) (Streptococcus lactis).